The following is a 135-amino-acid chain: MACGLVASNLNLKPGECLKVRGEVASDAKSFVLNLGKDSNNLCLHFNPRFNAHGDANTIVCNTKEDGTWGTEHREPAFPFQPGSITEVCITFDQADLTIKLPDGHEFKFPNRLNMEAINYMAADGDFKIKCVAFE.

Ala2 carries the post-translational modification N-acetylalanine. The Galectin domain occupies Gly4–Glu135. Lys13, Lys19, and Lys29 each carry N6-acetyllysine. Residue Ser30 is modified to Phosphoserine. A beta-D-galactoside is bound by residues His45–Arg49, His53, Asn62, and Trp69–Glu72. Lys108 is subject to N6-acetyllysine; alternate. Lys108 is modified (N6-succinyllysine; alternate). Lys128 is modified (N6-acetyllysine).

In terms of assembly, homodimer. Binds LGALS3BP. Interacts with CD2, CD3, CD4, CD6, CD7, CD43, ALCAM and CD45. Interacts with laminin (via poly-N-acetyllactosamine). Interacts with SUSD2. Interacts with cargo receptor TMED10; the interaction mediates the translocation from the cytoplasm into the ERGIC (endoplasmic reticulum-Golgi intermediate compartment) and thereby secretion. Interacts with CD69.

Its subcellular location is the secreted. The protein localises to the extracellular space. The protein resides in the extracellular matrix. It is found in the cytoplasm. Functionally, lectin that binds beta-galactoside and a wide array of complex carbohydrates. Plays a role in regulating apoptosis, cell proliferation and cell differentiation. Inhibits CD45 protein phosphatase activity and therefore the dephosphorylation of Lyn kinase. Strong inducer of T-cell apoptosis. Plays a negative role in Th17 cell differentiation via activation of the receptor CD69. The sequence is that of Galectin-1 (Lgals1) from Mus musculus (Mouse).